We begin with the raw amino-acid sequence, 302 residues long: Probable 2-(5''-triphosphoribosyl)-3'-dephosphocoenzyme-A synthase (302 aa).

Belongs to the CitG/MdcB family.

It carries out the reaction 3'-dephospho-CoA + ATP = 2'-(5''-triphospho-alpha-D-ribosyl)-3'-dephospho-CoA + adenine. This is Probable 2-(5''-triphosphoribosyl)-3'-dephosphocoenzyme-A synthase from Citrobacter koseri (strain ATCC BAA-895 / CDC 4225-83 / SGSC4696).